The following is a 554-amino-acid chain: 2-succinyl-5-enolpyruvyl-6-hydroxy-3-cyclohexene-1-carboxylate synthase (554 aa).

This sequence belongs to the TPP enzyme family. MenD subfamily. Homodimer. It depends on Mg(2+) as a cofactor. Mn(2+) serves as cofactor. Requires thiamine diphosphate as cofactor.

It carries out the reaction isochorismate + 2-oxoglutarate + H(+) = 5-enolpyruvoyl-6-hydroxy-2-succinyl-cyclohex-3-ene-1-carboxylate + CO2. It participates in quinol/quinone metabolism; 1,4-dihydroxy-2-naphthoate biosynthesis; 1,4-dihydroxy-2-naphthoate from chorismate: step 2/7. The protein operates within quinol/quinone metabolism; menaquinone biosynthesis. In terms of biological role, catalyzes the thiamine diphosphate-dependent decarboxylation of 2-oxoglutarate and the subsequent addition of the resulting succinic semialdehyde-thiamine pyrophosphate anion to isochorismate to yield 2-succinyl-5-enolpyruvyl-6-hydroxy-3-cyclohexene-1-carboxylate (SEPHCHC). The chain is 2-succinyl-5-enolpyruvyl-6-hydroxy-3-cyclohexene-1-carboxylate synthase from Renibacterium salmoninarum (strain ATCC 33209 / DSM 20767 / JCM 11484 / NBRC 15589 / NCIMB 2235).